The sequence spans 318 residues: MSSEPVPQAVIDELERVLVNLDKSNPLSFRYRALFSLNALAKKGDKRAVDAIYKAFIDDSELLKHEMAYVMGQSGQQYAVQPLINIVNDLDQQVMVRHEAAEALGALGFTESLPVLEKYYKEDPLAPIRETCELAIARIQWKNGLDKNNEKITPSMYDSVVDPAPPMPDHEQDVKSEVAKLRSEIVDQNLPLFYRYRVMFRLRNIGNEEAVLALTDGFKDPSPLFRHEIAFVFGQMIAPASVPALIKVLENTEEVPMVRHEAAEALGGIANDECLPVLKKFSKDDVRVVAESCIVALDMIEYEKSGDMEYAYIPKVSA.

Histidine 65, glutamate 66, histidine 98, and glutamate 99 together coordinate Fe cation. HEAT-like PBS-type repeat units lie at residues 96 to 122 (VRHE…YYKE), 194 to 220 (YRYR…GFKD), 225 to 251 (FRHE…VLEN), and 258 to 284 (VRHE…FSKD). Residues histidine 227, glutamate 228, histidine 260, and glutamate 261 each coordinate Fe cation.

This sequence belongs to the deoxyhypusine hydroxylase family. Fe(2+) is required as a cofactor.

The protein localises to the cytoplasm. It localises to the nucleus. It catalyses the reaction [eIF5A protein]-deoxyhypusine + AH2 + O2 = [eIF5A protein]-hypusine + A + H2O. It participates in protein modification; eIF5A hypusination. Functionally, catalyzes the hydroxylation of the N(6)-(4-aminobutyl)-L-lysine intermediate to form hypusine, an essential post-translational modification only found in mature eIF-5A factor. This is Deoxyhypusine hydroxylase (lia1) from Schizosaccharomyces pombe (strain 972 / ATCC 24843) (Fission yeast).